A 278-amino-acid chain; its full sequence is uncharacterized protein (278 aa).

Residues 1-16 are compositionally biased toward basic and acidic residues; it reads MFGLKVKDAQKDDQKS. Disordered regions lie at residues 1 to 86 and 98 to 126; these read MFGL…RGSN and FGTT…TPWL. 2 stretches are compositionally biased toward low complexity: residues 33-45 and 99-117; these read QGTS…RGSS and GTTS…STPS.

Belongs to the adhesin P1 family.

This is an uncharacterized protein from Mycoplasma pneumoniae (strain ATCC 29342 / M129 / Subtype 1) (Mycoplasmoides pneumoniae).